Reading from the N-terminus, the 432-residue chain is Trigger factor (432 aa).

Residues 161–246 (EDRVTIDFTG…LKKVEERELP (86 aa)) form the PPIase FKBP-type domain.

It belongs to the FKBP-type PPIase family. Tig subfamily.

The protein localises to the cytoplasm. It carries out the reaction [protein]-peptidylproline (omega=180) = [protein]-peptidylproline (omega=0). Involved in protein export. Acts as a chaperone by maintaining the newly synthesized protein in an open conformation. Functions as a peptidyl-prolyl cis-trans isomerase. This chain is Trigger factor, found in Klebsiella pneumoniae (strain 342).